The sequence spans 343 residues: Dual oxidase maturation factor 1 (343 aa).

Residues 1–24 are Extracellular-facing; it reads MATLGHTFPFYAGPKPTFPMDTTL. Residues 25–45 traverse the membrane as a helical segment; that stretch reads ASIIMIFLTALATFIVILPGI. The Cytoplasmic segment spans residues 46-51; that stretch reads RGKTRL. The helical transmembrane segment at 52-72 threads the bilayer; the sequence is FWLLRVVTSLFIGAAILAVNF. Topologically, residues 73 to 183 are extracellular; it reads SSEWSVGQVS…RLAGHYTSAM (111 aa). 3 N-linked (GlcNAc...) asparagine glycosylation sites follow: Asn84, Asn109, and Asn121. The chain crosses the membrane as a helical span at residues 184 to 204; the sequence is LWVAFLCWLLANVMLSMPVLV. Residues 205–206 are Cytoplasmic-facing; that stretch reads YG. The chain crosses the membrane as a helical span at residues 207 to 227; sequence GYMLLATGIFQLLALLFFSMA. The Extracellular portion of the chain corresponds to 228–249; it reads TSLTSPCPLHLGASVLHTHHGP. Residues 250 to 270 traverse the membrane as a helical segment; that stretch reads AFWITLTTGLLCVLLGLAMAV. At 271–343 the chain is on the cytoplasmic side; that stretch reads AHRMQPHRLK…AHPKDPDCAL (73 aa). The segment at 306-343 is disordered; the sequence is RYRSMADSPKSQDIPLSEASSTKAYCKEAHPKDPDCAL. The span at 330–343 shows a compositional bias: basic and acidic residues; that stretch reads YCKEAHPKDPDCAL.

This sequence belongs to the DUOXA family. May interact with NUMB. As to expression, specifically expressed in thyroid gland. Also detected in esophagus.

It localises to the membrane. Functionally, may be required for the maturation and the transport from the endoplasmic reticulum to the plasma membrane of functional DUOX1. The protein is Dual oxidase maturation factor 1 (DUOXA1) of Homo sapiens (Human).